A 260-amino-acid chain; its full sequence is Hydroxyethylthiazole kinase 1 (260 aa).

Methionine 39 provides a ligand contact to substrate. Residues arginine 115 and threonine 160 each coordinate ATP. Glycine 187 lines the substrate pocket.

The protein belongs to the Thz kinase family. Mg(2+) serves as cofactor.

It carries out the reaction 5-(2-hydroxyethyl)-4-methylthiazole + ATP = 4-methyl-5-(2-phosphooxyethyl)-thiazole + ADP + H(+). The protein operates within cofactor biosynthesis; thiamine diphosphate biosynthesis; 4-methyl-5-(2-phosphoethyl)-thiazole from 5-(2-hydroxyethyl)-4-methylthiazole: step 1/1. Its function is as follows. Catalyzes the phosphorylation of the hydroxyl group of 4-methyl-5-beta-hydroxyethylthiazole (THZ). The protein is Hydroxyethylthiazole kinase 1 of Streptococcus pneumoniae serotype 4 (strain ATCC BAA-334 / TIGR4).